Consider the following 507-residue polypeptide: Protein zntA (507 aa).

The first 18 residues, 1-18 (MSIFAYSILAGLAPLLSS), serve as a signal peptide directing secretion. An N-linked (GlcNAc...) asparagine glycan is attached at asparagine 31. A helical transmembrane segment spans residues 35–55 (FHILLCISAGLLFAVASLELI). The disordered stretch occupies residues 124–179 (GLNLNNLNQATNLDNNEEDNDNLDNDGENEIENDHDHDHQEDEGGDNDHDHESEEK). Low complexity predominate over residues 125–137 (LNLNNLNQATNLD). A compositionally biased stretch (acidic residues) spans 138 to 154 (NNEEDNDNLDNDGENEI). Residues 155–179 (ENDHDHDHQEDEGGDNDHDHESEEK) show a composition bias toward basic and acidic residues. The chain crosses the membrane as a helical span at residues 185 to 205 (IPMYGIGFGFAILIIVESIFS). The tract at residues 209 to 264 (GGGGGGGHHSHSHGSLSSSSSNDVISDYISNNNSNNINNNDDDNNNNNNNNDDDDD) is disordered. Over residues 221 to 258 (HGSLSSSSSNDVISDYISNNNSNNINNNDDDNNNNNNN) the composition is skewed to low complexity. 5 N-linked (GlcNAc...) asparagine glycosylation sites follow: asparagine 240, asparagine 298, asparagine 328, asparagine 342, and asparagine 351. The disordered stretch occupies residues 305–350 (PNIASPVMNKDNNNNDKDKNRNSNKSDIKNSGSINNGNNSGNNNNN). Residues 317 to 332 (NNNDKDKNRNSNKSDI) show a composition bias toward basic and acidic residues. Over residues 333-350 (KNSGSINNGNNSGNNNNN) the composition is skewed to low complexity. 5 helical membrane-spanning segments follow: residues 355-375 (LTITTFIALSIHSFVDGVVIS), 388-408 (VALAIVIHKIPDGLVLSSLIL), 422-442 (FFYFLLISCMTPLGSFISSFL), 451-471 (GAFVLGFGAGTFIYITSTAIL), and 486-506 (LFSIFLGYLLFIFLDSQFHGA).

This sequence belongs to the ZIP transporter (TC 2.A.5) family.

The protein localises to the membrane. Its function is as follows. May transport divalent cations. May participate, with dstA, in the regulation of the differentiation of stalk cells during development. This chain is Protein zntA (zntA), found in Dictyostelium discoideum (Social amoeba).